A 125-amino-acid chain; its full sequence is Apolipoprotein C-IV (125 aa).

A signal peptide spans 1-27 (MSLLRHSLQALPALCLCVLVLACIGAC).

Belongs to the apolipoprotein C4 family.

Its subcellular location is the secreted. Its function is as follows. May participate in lipoprotein metabolism. The polypeptide is Apolipoprotein C-IV (APOC4) (Ateles geoffroyi (Black-handed spider monkey)).